The primary structure comprises 236 residues: Biosynthetic peptidoglycan transglycosylase (236 aa).

The chain crosses the membrane as a helical span at residues Ala12–Pro31.

Belongs to the glycosyltransferase 51 family.

It is found in the cell inner membrane. It carries out the reaction [GlcNAc-(1-&gt;4)-Mur2Ac(oyl-L-Ala-gamma-D-Glu-L-Lys-D-Ala-D-Ala)](n)-di-trans,octa-cis-undecaprenyl diphosphate + beta-D-GlcNAc-(1-&gt;4)-Mur2Ac(oyl-L-Ala-gamma-D-Glu-L-Lys-D-Ala-D-Ala)-di-trans,octa-cis-undecaprenyl diphosphate = [GlcNAc-(1-&gt;4)-Mur2Ac(oyl-L-Ala-gamma-D-Glu-L-Lys-D-Ala-D-Ala)](n+1)-di-trans,octa-cis-undecaprenyl diphosphate + di-trans,octa-cis-undecaprenyl diphosphate + H(+). It participates in cell wall biogenesis; peptidoglycan biosynthesis. Peptidoglycan polymerase that catalyzes glycan chain elongation from lipid-linked precursors. The sequence is that of Biosynthetic peptidoglycan transglycosylase from Pseudomonas entomophila (strain L48).